The primary structure comprises 416 residues: Probable tRNA pseudouridine synthase D (416 aa).

Catalysis depends on D83, which acts as the Nucleophile. The 222-residue stretch at 158–379 (GFPNYFGYQR…PGGRRELLIR (222 aa)) folds into the TRUD domain.

The protein belongs to the pseudouridine synthase TruD family.

It catalyses the reaction uridine(13) in tRNA = pseudouridine(13) in tRNA. Its function is as follows. Could be responsible for synthesis of pseudouridine from uracil-13 in transfer RNAs. The sequence is that of Probable tRNA pseudouridine synthase D from Thermococcus onnurineus (strain NA1).